The chain runs to 454 residues: Bifunctional protein GlmU (454 aa).

The segment at 1 to 232 (MTDRTCLSIV…VDNVIGINNR (232 aa)) is pyrophosphorylase. Residues 11–14 (LAAG), lysine 25, glutamine 78, and 83–84 (GT) each bind UDP-N-acetyl-alpha-D-glucosamine. Aspartate 108 serves as a coordination point for Mg(2+). Positions 144, 158, 173, and 230 each coordinate UDP-N-acetyl-alpha-D-glucosamine. Asparagine 230 is a Mg(2+) binding site. Residues 233 to 253 (AELAEAETIWQNRKRRELMLS) are linker. An N-acetyltransferase region spans residues 254 to 454 (GVTLIAPETV…AIKAAKSVSK (201 aa)). UDP-N-acetyl-alpha-D-glucosamine contacts are provided by arginine 319 and lysine 337. Residue histidine 349 is the Proton acceptor of the active site. Tyrosine 352 and asparagine 363 together coordinate UDP-N-acetyl-alpha-D-glucosamine. Residues alanine 366, 372 to 373 (NY), serine 391, serine 409, and arginine 426 contribute to the acetyl-CoA site.

This sequence in the N-terminal section; belongs to the N-acetylglucosamine-1-phosphate uridyltransferase family. The protein in the C-terminal section; belongs to the transferase hexapeptide repeat family. As to quaternary structure, homotrimer. Requires Mg(2+) as cofactor.

The protein resides in the cytoplasm. The enzyme catalyses alpha-D-glucosamine 1-phosphate + acetyl-CoA = N-acetyl-alpha-D-glucosamine 1-phosphate + CoA + H(+). It catalyses the reaction N-acetyl-alpha-D-glucosamine 1-phosphate + UTP + H(+) = UDP-N-acetyl-alpha-D-glucosamine + diphosphate. Its pathway is nucleotide-sugar biosynthesis; UDP-N-acetyl-alpha-D-glucosamine biosynthesis; N-acetyl-alpha-D-glucosamine 1-phosphate from alpha-D-glucosamine 6-phosphate (route II): step 2/2. The protein operates within nucleotide-sugar biosynthesis; UDP-N-acetyl-alpha-D-glucosamine biosynthesis; UDP-N-acetyl-alpha-D-glucosamine from N-acetyl-alpha-D-glucosamine 1-phosphate: step 1/1. It functions in the pathway bacterial outer membrane biogenesis; LPS lipid A biosynthesis. Catalyzes the last two sequential reactions in the de novo biosynthetic pathway for UDP-N-acetylglucosamine (UDP-GlcNAc). The C-terminal domain catalyzes the transfer of acetyl group from acetyl coenzyme A to glucosamine-1-phosphate (GlcN-1-P) to produce N-acetylglucosamine-1-phosphate (GlcNAc-1-P), which is converted into UDP-GlcNAc by the transfer of uridine 5-monophosphate (from uridine 5-triphosphate), a reaction catalyzed by the N-terminal domain. In Brucella abortus (strain S19), this protein is Bifunctional protein GlmU.